The following is a 185-amino-acid chain: MINVNEFRPGITFEFENEIYVVISAQHSKQGRGQANVKTKVKNLRTGAITIKTFSGGERVEKAHIEKISMSFLYNDGESIVLMDDSTYEQVAIENTKITWELNFLTEGIKVKLRKFNNEILDIELPAKIELKITSTFDAVRGNTTTNPTKRATLETGYEIDVPLFIKEGESVIVSTEDGKYVSRG.

Belongs to the elongation factor P family.

Its subcellular location is the cytoplasm. It participates in protein biosynthesis; polypeptide chain elongation. Functionally, involved in peptide bond synthesis. Stimulates efficient translation and peptide-bond synthesis on native or reconstituted 70S ribosomes in vitro. Probably functions indirectly by altering the affinity of the ribosome for aminoacyl-tRNA, thus increasing their reactivity as acceptors for peptidyl transferase. In Mesomycoplasma hyopneumoniae (strain 7448) (Mycoplasma hyopneumoniae), this protein is Elongation factor P.